The chain runs to 101 residues: uncharacterized protein (101 aa).

The disordered stretch occupies residues 39–74; it reads CDERHGRPLPHSQESQHGSATSKKAVRGTADTAPLE. Residues 50-60 show a composition bias toward polar residues; the sequence is SQESQHGSATS.

This is an uncharacterized protein from Homo sapiens (Human).